We begin with the raw amino-acid sequence, 196 residues long: tRNA(Phe) 7-((3-amino-3-carboxypropyl)-4-demethylwyosine(37)-N(4))-methyltransferase 1 (196 aa).

This sequence belongs to the TYW3 family.

It carries out the reaction 4-demethyl-7-[(3S)-3-amino-3-carboxypropyl]wyosine(37) in tRNA(Phe) + S-adenosyl-L-methionine = 7-[(3S)-3-amino-3-carboxypropyl]wyosine(37) in tRNA(Phe) + S-adenosyl-L-homocysteine + H(+). Functionally, S-adenosyl-L-methionine-dependent methyltransferase that acts as a component of the wyosine derivatives biosynthesis pathway. Probably methylates N-4 position of wybutosine-86 to produce wybutosine-72. The polypeptide is tRNA(Phe) 7-((3-amino-3-carboxypropyl)-4-demethylwyosine(37)-N(4))-methyltransferase 1 (Pyrococcus furiosus (strain ATCC 43587 / DSM 3638 / JCM 8422 / Vc1)).